The chain runs to 208 residues: Imidazole glycerol phosphate synthase subunit HisH (208 aa).

The 206-residue stretch at 1 to 206 (MIVIVDYDTG…KEMTEDEALS (206 aa)) folds into the Glutamine amidotransferase type-1 domain. Cysteine 79 (nucleophile) is an active-site residue. Residues histidine 181 and glutamate 183 contribute to the active site.

In terms of assembly, heterodimer of HisH and HisF.

The protein resides in the cytoplasm. The catalysed reaction is 5-[(5-phospho-1-deoxy-D-ribulos-1-ylimino)methylamino]-1-(5-phospho-beta-D-ribosyl)imidazole-4-carboxamide + L-glutamine = D-erythro-1-(imidazol-4-yl)glycerol 3-phosphate + 5-amino-1-(5-phospho-beta-D-ribosyl)imidazole-4-carboxamide + L-glutamate + H(+). It catalyses the reaction L-glutamine + H2O = L-glutamate + NH4(+). It functions in the pathway amino-acid biosynthesis; L-histidine biosynthesis; L-histidine from 5-phospho-alpha-D-ribose 1-diphosphate: step 5/9. In terms of biological role, IGPS catalyzes the conversion of PRFAR and glutamine to IGP, AICAR and glutamate. The HisH subunit catalyzes the hydrolysis of glutamine to glutamate and ammonia as part of the synthesis of IGP and AICAR. The resulting ammonia molecule is channeled to the active site of HisF. The protein is Imidazole glycerol phosphate synthase subunit HisH of Lacticaseibacillus casei (strain BL23) (Lactobacillus casei).